Here is a 339-residue protein sequence, read N- to C-terminus: Phosphoribosylformylglycinamidine cyclo-ligase (339 aa).

It belongs to the AIR synthase family.

The protein localises to the cytoplasm. It carries out the reaction 2-formamido-N(1)-(5-O-phospho-beta-D-ribosyl)acetamidine + ATP = 5-amino-1-(5-phospho-beta-D-ribosyl)imidazole + ADP + phosphate + H(+). It participates in purine metabolism; IMP biosynthesis via de novo pathway; 5-amino-1-(5-phospho-D-ribosyl)imidazole from N(2)-formyl-N(1)-(5-phospho-D-ribosyl)glycinamide: step 2/2. This is Phosphoribosylformylglycinamidine cyclo-ligase from Oceanobacillus iheyensis (strain DSM 14371 / CIP 107618 / JCM 11309 / KCTC 3954 / HTE831).